Consider the following 507-residue polypeptide: Flagellar hook-associated protein 1 (507 aa).

This sequence belongs to the flagella basal body rod proteins family.

It is found in the secreted. Its subcellular location is the bacterial flagellum. The polypeptide is Flagellar hook-associated protein 1 (flgK) (Bacillus subtilis (strain 168)).